Reading from the N-terminus, the 429-residue chain is Enolase (429 aa).

Position 163 (Gln163) interacts with (2R)-2-phosphoglycerate. Glu205 (proton donor) is an active-site residue. Mg(2+) is bound by residues Asp242, Glu285, and Asp312. Lys337, Arg366, Ser367, and Lys388 together coordinate (2R)-2-phosphoglycerate. Lys337 (proton acceptor) is an active-site residue.

The protein belongs to the enolase family. The cofactor is Mg(2+).

It localises to the cytoplasm. Its subcellular location is the secreted. It is found in the cell surface. It carries out the reaction (2R)-2-phosphoglycerate = phosphoenolpyruvate + H2O. It functions in the pathway carbohydrate degradation; glycolysis; pyruvate from D-glyceraldehyde 3-phosphate: step 4/5. Functionally, catalyzes the reversible conversion of 2-phosphoglycerate (2-PG) into phosphoenolpyruvate (PEP). It is essential for the degradation of carbohydrates via glycolysis. The polypeptide is Enolase (Methylorubrum extorquens (strain PA1) (Methylobacterium extorquens)).